Consider the following 401-residue polypeptide: Formate-dependent phosphoribosylglycinamide formyltransferase (401 aa).

N(1)-(5-phospho-beta-D-ribosyl)glycinamide is bound by residues 22–23 (EL) and Glu82. ATP is bound by residues Arg115, Lys157, 162–167 (SSGKGQ), 197–200 (EGFI), and Glu205. In terms of domain architecture, ATP-grasp spans 120 to 315 (RLAAESLGLP…EFELHARAIL (196 aa)). Residues Glu274 and Glu286 each contribute to the Mg(2+) site. Residues Asp293, Lys362, and 369 to 370 (RR) contribute to the N(1)-(5-phospho-beta-D-ribosyl)glycinamide site.

This sequence belongs to the PurK/PurT family. In terms of assembly, homodimer.

The catalysed reaction is N(1)-(5-phospho-beta-D-ribosyl)glycinamide + formate + ATP = N(2)-formyl-N(1)-(5-phospho-beta-D-ribosyl)glycinamide + ADP + phosphate + H(+). It participates in purine metabolism; IMP biosynthesis via de novo pathway; N(2)-formyl-N(1)-(5-phospho-D-ribosyl)glycinamide from N(1)-(5-phospho-D-ribosyl)glycinamide (formate route): step 1/1. Functionally, involved in the de novo purine biosynthesis. Catalyzes the transfer of formate to 5-phospho-ribosyl-glycinamide (GAR), producing 5-phospho-ribosyl-N-formylglycinamide (FGAR). Formate is provided by PurU via hydrolysis of 10-formyl-tetrahydrofolate. The protein is Formate-dependent phosphoribosylglycinamide formyltransferase of Cupriavidus taiwanensis (strain DSM 17343 / BCRC 17206 / CCUG 44338 / CIP 107171 / LMG 19424 / R1) (Ralstonia taiwanensis (strain LMG 19424)).